The following is a 213-amino-acid chain: Putative amidate substrates transporter protein (213 aa).

The next 6 helical transmembrane spans lie at 4–20, 32–48, 56–72, 116–132, 146–162, and 172–188; these read VGLFYVGAVLIIDGLML, LNFFVGGLQVVTPTVLI, AVIFAASGLYLFGFTYL, VIWLLWAVLWFMLFLLL, VAVAEGVITAAVPAFLI, and LPAAVIAVIGFAAVVLA.

The protein belongs to the AmiS/UreI family.

It is found in the cell membrane. Its function is as follows. Possible transporter that might be responsible for the adsorption of amidase substrates or release of their hydrolysis products. The protein is Putative amidate substrates transporter protein of Mycolicibacterium smegmatis (Mycobacterium smegmatis).